The following is a 584-amino-acid chain: 65 kDa membrane protein (584 aa).

An N-terminal signal peptide occupies residues 1–30; that stretch reads MKFKSLITTTLALGVLASTGANFNNNEASA. MAP repeat units lie at residues 45-154, 156-265, 266-374, 375-474, and 475-584; these read GYSK…EDKK, DKAN…ENKA, KRNY…KADR, YVPY…TGTK, and AKAD…KKNK.

The protein localises to the cell membrane. Binds various plasma and ECM-proteins. The sequence is that of 65 kDa membrane protein from Staphylococcus aureus (strain Newman).